The sequence spans 248 residues: ATP synthase subunit a, chloroplastic (248 aa).

Helical transmembrane passes span 38–58 (QVLLTSWFVLAVLLGLAVLTV), 96–116 (VPFIGTLFLFIFVSNWSGALV), 135–155 (INTTVALALLTSVAYFYAGLA), 200–220 (LVVAVLVSLVPLVVPIPVMLL), and 221–241 (GLFTSGIQALIFATLAAAYIG).

This sequence belongs to the ATPase A chain family. As to quaternary structure, F-type ATPases have 2 components, CF(1) - the catalytic core - and CF(0) - the membrane proton channel. CF(1) has five subunits: alpha(3), beta(3), gamma(1), delta(1), epsilon(1). CF(0) has four main subunits: a, b, b' and c.

The protein localises to the plastid. Its subcellular location is the chloroplast thylakoid membrane. In terms of biological role, key component of the proton channel; it plays a direct role in the translocation of protons across the membrane. The chain is ATP synthase subunit a, chloroplastic from Welwitschia mirabilis (Tree tumbo).